The sequence spans 336 residues: tRNA-dihydrouridine(20/20a) synthase (336 aa).

FMN contacts are provided by residues 24–26 (PMM) and Q77. The active-site Proton donor is the C107. FMN contacts are provided by residues K146, H178, 218–220 (NGG), and 240–241 (GR).

This sequence belongs to the Dus family. DusA subfamily. It depends on FMN as a cofactor.

The enzyme catalyses 5,6-dihydrouridine(20) in tRNA + NADP(+) = uridine(20) in tRNA + NADPH + H(+). It catalyses the reaction 5,6-dihydrouridine(20) in tRNA + NAD(+) = uridine(20) in tRNA + NADH + H(+). The catalysed reaction is 5,6-dihydrouridine(20a) in tRNA + NADP(+) = uridine(20a) in tRNA + NADPH + H(+). It carries out the reaction 5,6-dihydrouridine(20a) in tRNA + NAD(+) = uridine(20a) in tRNA + NADH + H(+). Its function is as follows. Catalyzes the synthesis of 5,6-dihydrouridine (D), a modified base found in the D-loop of most tRNAs, via the reduction of the C5-C6 double bond in target uridines. Specifically modifies U20 and U20a in tRNAs. In Pseudomonas putida (strain ATCC 47054 / DSM 6125 / CFBP 8728 / NCIMB 11950 / KT2440), this protein is tRNA-dihydrouridine(20/20a) synthase.